The following is a 331-amino-acid chain: 7,8-didemethyl-8-hydroxy-5-deazariboflavin synthase (331 aa).

Positions 6–244 constitute a Radical SAM core domain; the sequence is ITFSKNAFLP…ADVAVQIPPN (239 aa). [4Fe-4S] cluster-binding residues include cysteine 20, cysteine 24, and cysteine 27.

Belongs to the radical SAM superfamily. CofG family. As to quaternary structure, consists of two subunits, CofG and CofH. [4Fe-4S] cluster is required as a cofactor.

The catalysed reaction is 5-amino-5-(4-hydroxybenzyl)-6-(D-ribitylimino)-5,6-dihydrouracil + S-adenosyl-L-methionine = 7,8-didemethyl-8-hydroxy-5-deazariboflavin + 5'-deoxyadenosine + L-methionine + NH4(+) + H(+). The protein operates within cofactor biosynthesis; coenzyme F0 biosynthesis. Catalyzes the radical-mediated synthesis of 7,8-didemethyl-8-hydroxy-5-deazariboflavin from 5-amino-5-(4-hydroxybenzyl)-6-(D-ribitylimino)-5,6-dihydrouracil. The sequence is that of 7,8-didemethyl-8-hydroxy-5-deazariboflavin synthase from Methanoculleus marisnigri (strain ATCC 35101 / DSM 1498 / JR1).